We begin with the raw amino-acid sequence, 197 residues long: MNQMVSLTSILEHNQRFVSEKKYEPYKTTKFPSKKLVIVTCMDTRLTELLPQAMGLKNGDAKIVKNAGAIVSHPFGSVMRSILVAIYELQAEEVCIVGHHECGMSGLNASSILEKAKERGVEDSCLNLLTSAGLDLKTWLTGFHSVEESVSHSVNMIKNHPLLPKKVPVHGLVIHPETGKLDVVINGYETELINNHS.

Zn(2+) is bound by residues cysteine 41, aspartate 43, histidine 99, and cysteine 102.

The protein belongs to the beta-class carbonic anhydrase family. Zn(2+) serves as cofactor.

The enzyme catalyses hydrogencarbonate + H(+) = CO2 + H2O. Its function is as follows. Reversible hydration of carbon dioxide. The protein is Putative carbonic anhydrase YvdA (yvdA) of Bacillus subtilis (strain 168).